The chain runs to 336 residues: Ketol-acid reductoisomerase (NADP(+)) (336 aa).

The region spanning 3–183 (ATMYYDRDVS…GGTRAGVLET (181 aa)) is the KARI N-terminal Rossmann domain. NADP(+) contacts are provided by residues 26-29 (YGSQ), Arg-49, Ser-52, Ser-54, and 84-87 (DETQ). His-109 is an active-site residue. NADP(+) is bound at residue Gly-135. The 146-residue stretch at 184 to 329 (TFKEETETDL…RELRSKMPFI (146 aa)) folds into the KARI C-terminal knotted domain. Residues Asp-192, Glu-196, Glu-228, and Glu-232 each contribute to the Mg(2+) site. Ser-253 provides a ligand contact to substrate.

Belongs to the ketol-acid reductoisomerase family. Requires Mg(2+) as cofactor.

It carries out the reaction (2R)-2,3-dihydroxy-3-methylbutanoate + NADP(+) = (2S)-2-acetolactate + NADPH + H(+). The enzyme catalyses (2R,3R)-2,3-dihydroxy-3-methylpentanoate + NADP(+) = (S)-2-ethyl-2-hydroxy-3-oxobutanoate + NADPH + H(+). The protein operates within amino-acid biosynthesis; L-isoleucine biosynthesis; L-isoleucine from 2-oxobutanoate: step 2/4. Its pathway is amino-acid biosynthesis; L-valine biosynthesis; L-valine from pyruvate: step 2/4. In terms of biological role, involved in the biosynthesis of branched-chain amino acids (BCAA). Catalyzes an alkyl-migration followed by a ketol-acid reduction of (S)-2-acetolactate (S2AL) to yield (R)-2,3-dihydroxy-isovalerate. In the isomerase reaction, S2AL is rearranged via a Mg-dependent methyl migration to produce 3-hydroxy-3-methyl-2-ketobutyrate (HMKB). In the reductase reaction, this 2-ketoacid undergoes a metal-dependent reduction by NADPH to yield (R)-2,3-dihydroxy-isovalerate. This Deinococcus geothermalis (strain DSM 11300 / CIP 105573 / AG-3a) protein is Ketol-acid reductoisomerase (NADP(+)).